The chain runs to 163 residues: Shikimate kinase (163 aa).

Residue 10–15 (GVGKTT) participates in ATP binding. Thr-14 is a binding site for Mg(2+). 3 residues coordinate substrate: Asp-28, Arg-52, and Gly-75. An ATP-binding site is contributed by Arg-116. Arg-134 provides a ligand contact to substrate.

The protein belongs to the shikimate kinase family. In terms of assembly, monomer. The cofactor is Mg(2+).

Its subcellular location is the cytoplasm. It catalyses the reaction shikimate + ATP = 3-phosphoshikimate + ADP + H(+). It functions in the pathway metabolic intermediate biosynthesis; chorismate biosynthesis; chorismate from D-erythrose 4-phosphate and phosphoenolpyruvate: step 5/7. Functionally, catalyzes the specific phosphorylation of the 3-hydroxyl group of shikimic acid using ATP as a cosubstrate. This is Shikimate kinase from Streptococcus suis (strain 98HAH33).